We begin with the raw amino-acid sequence, 512 residues long: Delta(14)-sterol reductase (512 aa).

8 helical membrane-spanning segments follow: residues 27–47 (IGAS…GFLC), 100–120 (AVLG…LLPA), 140–160 (ACLS…VRGP), 172–192 (YIQL…YVYL), 242–262 (SFME…AFAA), 278–298 (WTPL…VIIS), 324–344 (FGFM…SIQA), and 353–373 (ALGP…YYIF). NADP(+) contacts are provided by residues Lys-380, Arg-384, Leu-407, Trp-412, and 419–420 (NY). The next 2 helical transmembrane spans lie at 418–438 (INYL…LAAG) and 458–478 (MKGA…ILLI). Residues Asp-484, 488–492 (CRRKY), and Tyr-499 each bind NADP(+).

The protein belongs to the ERG4/ERG24 family.

Its subcellular location is the membrane. The enzyme catalyses 4,4-dimethyl-5alpha-cholesta-8,24-dien-3beta-ol + NADP(+) = 4,4-dimethyl-5alpha-cholesta-8,14,24-trien-3beta-ol + NADPH + H(+). It functions in the pathway steroid biosynthesis; zymosterol biosynthesis; zymosterol from lanosterol: step 2/6. Its function is as follows. Reduces the C14=C15 double bond of 4,4-dimethyl-cholesta-8,14,24-trienol to produce 4,4-dimethyl-cholesta-8,24-dienol. The sequence is that of Delta(14)-sterol reductase (ERG3) from Septoria lycopersici (Tomato leaf spot fungus).